Reading from the N-terminus, the 415-residue chain is MLRLDTRFLPGFPEALSRHGPLLEEARRRLLAKRGEPGSMLGWMDLPEDTETLREVRRYREANPWVEDFVLIGIGGSALGPKALEAAFNESGVRFHYLDHVEPEPILRLLRTLDPRKTLVNAVSKSGSTAETLAGLAVFLKWLKAHLGEDWRRHLVVTTDPKEGPLRAFAEREGLKAFAIPKEVGGRFSALSPVGLLPLAFAGADLDALLMGARKANETALAPLEESLPLKTALLLHLHRHLPVHVFMVYSERLSHLPSWFVQLHDESLGKVDRQGQRVGTTAVPALGPKDQHAQVQLFREGPLDKLLALVIPEAPLEDVEIPEVEGLEAASYLFGKTLFQLLKAEAEATYEALAEAGQRVYALFLPEVSPYAVGWLMQHLMWQTAFLGELWEVNAFDQPGVELGKVLTRKRLAG.

Catalysis depends on Glu-267, which acts as the Proton donor. Residues His-293 and Lys-406 contribute to the active site.

The protein belongs to the GPI family.

Its subcellular location is the cytoplasm. It catalyses the reaction alpha-D-glucose 6-phosphate = beta-D-fructose 6-phosphate. It functions in the pathway carbohydrate biosynthesis; gluconeogenesis. Its pathway is carbohydrate degradation; glycolysis; D-glyceraldehyde 3-phosphate and glycerone phosphate from D-glucose: step 2/4. In terms of biological role, catalyzes the reversible isomerization of glucose-6-phosphate to fructose-6-phosphate. In Thermus thermophilus (strain ATCC 27634 / DSM 579 / HB8), this protein is Glucose-6-phosphate isomerase.